Here is a 341-residue protein sequence, read N- to C-terminus: MINQTYRLVSARQFEVTYKDKVVHSDKVVVRPTHLSICAADQRYYTGSRGKEAMDKKLPMALIHEGIGKVMFDPTGTFKVGTRVVMVPNTPVEEHEVIAENYLRSSRFRSSGYDGFMQDYMFMAPDRLVELPDSINPHVAAFTELITIAVHALSRFERMAHKKRDTFGVWGDGNLGFIMTLLLKKKYPDSKVFIFGKTPYKLDHFSFVDAAYQINDIPEDVRLDHAFECVGGRGSESAIEQIIAHVHPEACVALLGVSEYPVEIETRMVLEKGITLIGSSRSGREDFARTVDFLAQYPEVVDYLETLVGGRFPVRSIEEITNAFEADLTSSWGKTVIEWEI.

Zn(2+)-binding residues include C38, H64, E65, and E144.

It belongs to the zinc-containing alcohol dehydrogenase family. Zn(2+) serves as cofactor.

It catalyses the reaction D-ribitol 5-phosphate + NADP(+) = D-ribulose 5-phosphate + NADPH + H(+). Its pathway is cell wall biogenesis; poly(ribitol phosphate) teichoic acid biosynthesis. In terms of biological role, catalyzes the NADPH dependent reduction of D-ribulose 5-phosphate to D-ribitol 5-phosphate. The sequence is that of Ribulose-5-phosphate reductase from Bacillus spizizenii (strain ATCC 23059 / NRRL B-14472 / W23) (Bacillus subtilis subsp. spizizenii).